Consider the following 147-residue polypeptide: Ubiquitin-conjugating enzyme E2 D3 (147 aa).

A UBC core domain is found at 1–147 (MALKRINKEL…SREWTQKYAM (147 aa)). Cysteine 21 and cysteine 107 are oxidised to a cystine. Residue cysteine 85 is the Glycyl thioester intermediate of the active site.

This sequence belongs to the ubiquitin-conjugating enzyme family. Interacts with SCF (SKP1-CUL1-F-box protein) E3 ubiquitin ligase complex; when Cullin is neddylated, the interaction between the E2 and the SCF complex is strengthened. Interacts with DAPK3. Interacts with BRCA1; the DNA damage checkpoint promotes the association with BRCA1 after ionizing radiation. Interacts non-covalently with ubiquitin. Interacts with E3 ubiquitin-protein ligase CBLC. Interacts with UBTD1. Interacts with RIGI and RNF135; involved in RIGI ubiquitination and activation. Phosphorylated by AURKB.

Its subcellular location is the cell membrane. It localises to the endosome membrane. It carries out the reaction S-ubiquitinyl-[E1 ubiquitin-activating enzyme]-L-cysteine + [E2 ubiquitin-conjugating enzyme]-L-cysteine = [E1 ubiquitin-activating enzyme]-L-cysteine + S-ubiquitinyl-[E2 ubiquitin-conjugating enzyme]-L-cysteine.. The enzyme catalyses S-ubiquitinyl-[E1 ubiquitin-activating enzyme]-L-cysteine + [acceptor protein]-L-lysine = [E1 ubiquitin-activating enzyme]-L-cysteine + N(6)-monoubiquitinyl-[acceptor protein]-L-lysine.. It functions in the pathway protein modification; protein ubiquitination. In terms of biological role, accepts ubiquitin from the E1 complex and catalyzes its covalent attachment to other proteins. In vitro catalyzes 'Lys-11'-, as well as 'Lys-48'-linked polyubiquitination. Cooperates with the E2 CDC34 and the SCF(FBXW11) E3 ligase complex for the polyubiquitination of NFKBIA leading to its subsequent proteasomal degradation. Acts as an initiator E2, priming the phosphorylated NFKBIA target at positions 'Lys-21' and/or 'Lys-22' with a monoubiquitin. Ubiquitin chain elongation is then performed by CDC34, building ubiquitin chains from the UBE2D3-primed NFKBIA-linked ubiquitin. Also acts as an initiator E2, in conjunction with RNF8, for the priming of PCNA. Monoubiquitination of PCNA, and its subsequent polyubiquitination, are essential events in the operation of the DNA damage tolerance (DDT) pathway that is activated after DNA damage caused by UV or chemical agents during S-phase. Associates with the BRCA1/BARD1 E3 ligase complex to perform ubiquitination at DNA damage sites following ionizing radiation leading to DNA repair. Targets DAPK3 for ubiquitination which influences promyelocytic leukemia protein nuclear body (PML-NB) formation in the nucleus. In conjunction with the MDM2 and TOPORS E3 ligases, functions ubiquitination of p53/TP53. In conjunction with the CBL E3 ligase, targets EGFR for polyubiquitination at the plasma membrane as well as during its internalization and transport on endosomes. In conjunction with the STUB1 E3 quality control E3 ligase, ubiquitinates unfolded proteins to catalyze their immediate destruction. Together with RNF135, catalyzes the viral RNA-dependent 'Lys-63'-linked polyubiquitination of RIGI to activate the downstream signaling pathway that leads to interferon beta production. Together with ZNF598, catalyzes ubiquitination of 40S ribosomal proteins in response to ribosome collisions. In cooperation with the GATOR2 complex, catalyzes 'Lys-6'-linked ubiquitination of NPRL2. The polypeptide is Ubiquitin-conjugating enzyme E2 D3 (UBE2D3) (Homo sapiens (Human)).